A 37-amino-acid polypeptide reads, in one-letter code: Alpha-conotoxin-like Kn1.2 (37 aa).

The span at 1–15 shows a compositional bias: basic and acidic residues; that stretch reads ESDGAHAKARADKPA. Positions 1–22 are excised as a propeptide; it reads ESDGAHAKARADKPARSATNRQ. The segment at 1-23 is disordered; it reads ESDGAHAKARADKPARSATNRQP. Disulfide bonds link C25-C31 and C26-C36. C36 bears the Cysteine amide mark.

The protein belongs to the conotoxin A superfamily. Expressed by the venom duct.

It is found in the secreted. Functionally, alpha-conotoxins act on postsynaptic membranes, they bind to the nicotinic acetylcholine receptors (nAChR) and thus inhibit them. This toxin inhibits high voltage-activated (HVA) calcium channel currents in rat DRG neurons (13% inhibition at 1 uM toxin) probably by activating GABA(B) receptors (GABBR1 and/or GABBR2). The sequence is that of Alpha-conotoxin-like Kn1.2 from Conus kinoshitai (Kinoshita's cone).